A 434-amino-acid chain; its full sequence is RHOMBOID-like protein 9, chloroplastic (434 aa).

The transit peptide at 1–68 directs the protein to the chloroplast; sequence MALFPLHHEV…SPRRRLCLVR (68 aa). Helical transmembrane passes span 182 to 202, 209 to 229, 238 to 258, 267 to 287, 289 to 309, 326 to 346, 352 to 372, and 399 to 419; these read FYAVSILASINVGVCLFEAAA, MGLLSLPLLYGAKINDLILAG, MFLHSGIPHVALSSWALLTFG, LFTFCLIYILGGVSGNFMSFL, TADPTVGGTGPAFALIGAWLV, LFQKAIIMTGFGLILSHFGPI, LGALIAGIVYGFFTCPVLQLG, and FLLFTIFVAVIVTSLLLIGDG.

It belongs to the peptidase S54 family.

Its subcellular location is the plastid. It localises to the chloroplast membrane. Its function is as follows. Probable rhomboid-type serine protease that catalyzes intramembrane proteolysis. The polypeptide is RHOMBOID-like protein 9, chloroplastic (Arabidopsis thaliana (Mouse-ear cress)).